Consider the following 127-residue polypeptide: uncharacterized protein (127 aa).

The residue at position 30 (Thr30) is a Phosphothreonine. A disordered region spans residues 51–75 (APTYEQVLYPPASQKKTSNSTSEES). The residue at position 63 (Ser63) is a Phosphoserine.

This is an uncharacterized protein from Mus musculus (Mouse).